The chain runs to 226 residues: tRNA (guanine-N(1)-)-methyltransferase (226 aa).

Residues G110 and I129 to L134 each bind S-adenosyl-L-methionine.

The protein belongs to the RNA methyltransferase TrmD family. As to quaternary structure, homodimer.

It localises to the cytoplasm. It catalyses the reaction guanosine(37) in tRNA + S-adenosyl-L-methionine = N(1)-methylguanosine(37) in tRNA + S-adenosyl-L-homocysteine + H(+). Its function is as follows. Specifically methylates guanosine-37 in various tRNAs. The polypeptide is tRNA (guanine-N(1)-)-methyltransferase (Malacoplasma penetrans (strain HF-2) (Mycoplasma penetrans)).